The primary structure comprises 360 residues: Galactoside alpha-(1,2)-fucosyltransferase 1 (360 aa).

Residues 1–8 (MWAPGHHH) lie on the Cytoplasmic side of the membrane. Residues 9–27 (LCLIFLLTCVFACVFFLLI) form a helical; Signal-anchor for type II membrane protein membrane-spanning segment. At 28–360 (HQNLFHSGLD…GINADLSPLQ (333 aa)) the chain is on the lumenal side. Residues Asn65, Asn301, and Asn327 are each glycosylated (N-linked (GlcNAc...) asparagine).

Belongs to the glycosyltransferase 11 family. As to expression, expressed in brain, intestine and kidney.

The protein resides in the golgi apparatus. It localises to the golgi stack membrane. The catalysed reaction is a ganglioside GM1 + GDP-beta-L-fucose = a ganglioside Fuc-GM1 + GDP + H(+). The enzyme catalyses a beta-D-galactosyl-(1-&gt;4)-N-acetyl-beta-D-glucosaminyl derivative + GDP-beta-L-fucose = an alpha-L-Fuc-(1-&gt;2)-beta-D-Gal-(1-&gt;4)-beta-D-GlcNAc derivative + GDP + H(+). It carries out the reaction a ganglioside GA1 + GDP-beta-L-fucose = a ganglioside Fuc-GA1 + GDP + H(+). It catalyses the reaction a beta-D-Gal-(1-&gt;3)-beta-D-GlcNAc-(1-&gt;3)-beta-D-Gal-(1-&gt;4)-beta-D-Glc-(1&lt;-&gt;1')-Cer(d18:1(4E)) + GDP-beta-L-fucose = alpha-L-fucosyl-(1-&gt;2)- beta-D-galactosyl-(1-&gt;3)-N-acetyl-beta-D-glucosaminyl-(1-&gt;3)-beta-D-galactosyl-(1-&gt;4)-beta-D-glucosyl-(1&lt;-&gt;1')-N-acylsphing-4-enine + GDP + H(+). The catalysed reaction is a neolactoside nLc4Cer(d18:1(4E)) + GDP-beta-L-fucose = a neolactoside IV(2)-alpha-Fuc-nLc4Cer(d18:1(4E)) + GDP + H(+). The enzyme catalyses beta-D-galactosyl-(1-&gt;3)-N-acetyl-D-galactosamine + GDP-beta-L-fucose = alpha-L-fucosyl-(1-&gt;2)-beta-D-galactosyl-(1-&gt;3)-N-acetyl-D-galactosamine + GDP + H(+). It participates in protein modification; protein glycosylation. Catalyzes the transfer of L-fucose, from a guanosine diphosphate-beta-L-fucose, to the terminal galactose residue of glycoconjugates through an alpha(1,2) linkage leading to H antigen synthesis that is an intermediate substrate in the synthesis of ABO blood group antigens. H antigen is essential for maturation of the glomerular layer of the main olfactory bulb, in cell migration and early cell-cell contacts during tumor associated angiogenesis. Preferentially fucosylates soluble lactose and to a lesser extent, fucosylates glycolipids gangliosides GA1 and GM1a. The sequence is that of Galactoside alpha-(1,2)-fucosyltransferase 1 from Bos taurus (Bovine).